The primary structure comprises 225 residues: ATP-dependent dethiobiotin synthetase BioD (225 aa).

12–17 (EVGKTY) is a binding site for ATP. Position 16 (threonine 16) interacts with Mg(2+). Lysine 37 is an active-site residue. Substrate is bound at residue serine 41. ATP is bound by residues aspartate 52, 114–117 (EGAG), and 174–175 (NC). Residues aspartate 52 and glutamate 114 each contribute to the Mg(2+) site.

Belongs to the dethiobiotin synthetase family. As to quaternary structure, homodimer. The cofactor is Mg(2+).

The protein localises to the cytoplasm. It catalyses the reaction (7R,8S)-7,8-diammoniononanoate + CO2 + ATP = (4R,5S)-dethiobiotin + ADP + phosphate + 3 H(+). It functions in the pathway cofactor biosynthesis; biotin biosynthesis; biotin from 7,8-diaminononanoate: step 1/2. In terms of biological role, catalyzes a mechanistically unusual reaction, the ATP-dependent insertion of CO2 between the N7 and N8 nitrogen atoms of 7,8-diaminopelargonic acid (DAPA, also called 7,8-diammoniononanoate) to form a ureido ring. The sequence is that of ATP-dependent dethiobiotin synthetase BioD from Francisella tularensis subsp. novicida (strain U112).